The sequence spans 397 residues: MDALLALHRRSRRTVVGLMSGTSLDGVDAALVQLDGSGPDLTMNPEAFVHIPYPTALRDLIRTNTDPASSSVQDVTRLDARLAETYAAAVDRVAAEADVDRGTVDLVGAHGQTVCHLPEPADCAGKDVRATLQLGNPSTLATRLGVPVVGNFRAADLALGGQGAPLVPYFDRVAFTAPDEARGLLNLGGIANLTVLPAGAAPDDVRAFDTGPANMVIDALAARLFDAPHDPDGRHANAGTPDHDLLADLLEGEYFRREPPKSTGRNDFGPDYVDRLLGAAQSRTLSPEDTMATATLLTAASVYQAYAQYVRPEQAIDELIVSGGGVHNDTLLRMLEEAFTPIPVRPTSDYGVAPDAKEALCFAVLAHEAVNGTPTNLPSVTGASARTPLGSLSVPGP.

Residue 21–28 (GTSLDGVD) coordinates ATP. Polar residues predominate over residues 373-384 (TPTNLPSVTGAS). The disordered stretch occupies residues 373–397 (TPTNLPSVTGASARTPLGSLSVPGP).

Belongs to the anhydro-N-acetylmuramic acid kinase family.

The catalysed reaction is 1,6-anhydro-N-acetyl-beta-muramate + ATP + H2O = N-acetyl-D-muramate 6-phosphate + ADP + H(+). It functions in the pathway amino-sugar metabolism; 1,6-anhydro-N-acetylmuramate degradation. Its pathway is cell wall biogenesis; peptidoglycan recycling. Catalyzes the specific phosphorylation of 1,6-anhydro-N-acetylmuramic acid (anhMurNAc) with the simultaneous cleavage of the 1,6-anhydro ring, generating MurNAc-6-P. Is required for the utilization of anhMurNAc either imported from the medium or derived from its own cell wall murein, and thus plays a role in cell wall recycling. This Salinibacter ruber (strain DSM 13855 / M31) protein is Anhydro-N-acetylmuramic acid kinase.